The following is a 78-amino-acid chain: Probable [Fe-S]-dependent transcriptional repressor (78 aa).

Iron-sulfur cluster-binding residues include cysteine 56, cysteine 61, cysteine 64, and cysteine 70.

Belongs to the FeoC family.

Its function is as follows. May function as a transcriptional regulator that controls feoABC expression. The sequence is that of Probable [Fe-S]-dependent transcriptional repressor from Salmonella agona (strain SL483).